We begin with the raw amino-acid sequence, 224 residues long: uncharacterized protein (224 aa).

This is an uncharacterized protein from Acanthamoeba polyphaga mimivirus (APMV).